Here is a 207-residue protein sequence, read N- to C-terminus: MKVEVQSLDASKKGSIELNDAVFGIEPRADILHRVVTWQLEKRRAPTRATRERSDVARSGKKFGRQKGGGTARHGDRRSPIFIGGGKAHGARARVFNPSLNKKVRALGLRMALSSKAKTGTLVVIEALDVEAKTKLLAAQIQSLGFGPKVLVVDGDTVNENFARASSNLVGLDVLPAVGANVYDILKHDTLVLTRAAVEKLEARLNG.

The span at 44–58 (RAPTRATRERSDVAR) shows a compositional bias: basic and acidic residues. The tract at residues 44-82 (RAPTRATRERSDVARSGKKFGRQKGGGTARHGDRRSPIF) is disordered.

It belongs to the universal ribosomal protein uL4 family. As to quaternary structure, part of the 50S ribosomal subunit.

One of the primary rRNA binding proteins, this protein initially binds near the 5'-end of the 23S rRNA. It is important during the early stages of 50S assembly. It makes multiple contacts with different domains of the 23S rRNA in the assembled 50S subunit and ribosome. Functionally, forms part of the polypeptide exit tunnel. This Zymomonas mobilis subsp. mobilis (strain ATCC 31821 / ZM4 / CP4) protein is Large ribosomal subunit protein uL4.